A 1050-amino-acid chain; its full sequence is Self-sufficient cytochrome P450 monooxygenase CYP505E5 (1050 aa).

Position 405 (C405) interacts with heme. The segment at 467-491 (RRSMLVARDGSSGESSNHLAEARGD) is disordered. A Flavodoxin-like domain is found at 500–641 (VSFFYGSNSG…DLEAWEETSL (142 aa)). FMN contacts are provided by residues 506–510 (SNSGT) and 585–617 (VFGCGHHDWTQTFYRIPILIDDLMHKAGATRLA). In terms of domain architecture, FAD-binding FR-type spans 679-907 (KGLIEAKVTA…RPAKESFHLP (229 aa)).

It in the N-terminal section; belongs to the cytochrome P450 family. Requires FAD as cofactor. It depends on FMN as a cofactor. Heme serves as cofactor.

The enzyme catalyses 2 oxidized [cytochrome P450] + NADPH = 2 reduced [cytochrome P450] + NADP(+) + H(+). It carries out the reaction an organic molecule + reduced [NADPH--hemoprotein reductase] + O2 = an alcohol + oxidized [NADPH--hemoprotein reductase] + H2O + H(+). The catalysed reaction is dodecanoate + reduced [NADPH--hemoprotein reductase] + O2 = 5-hydroxydodecanoate + oxidized [NADPH--hemoprotein reductase] + H2O + H(+). It catalyses the reaction tetradecanoate + reduced [NADPH--hemoprotein reductase] + O2 = 7-hydroxytetradecanoate + oxidized [NADPH--hemoprotein reductase] + H2O + H(+). The enzyme catalyses dodecan-1-ol + reduced [NADPH--hemoprotein reductase] + O2 = 1,5-dodecanediol + oxidized [NADPH--hemoprotein reductase] + H2O + H(+). It carries out the reaction dodecan-1-ol + reduced [NADPH--hemoprotein reductase] + O2 = 1,4-dodecanediol + oxidized [NADPH--hemoprotein reductase] + H2O + H(+). The catalysed reaction is dodecan-1-ol + reduced [NADPH--hemoprotein reductase] + O2 = 1,6-dodecanediol + oxidized [NADPH--hemoprotein reductase] + H2O + H(+). Functionally, self-sufficient cytochrome P450 monooxygenase that catalyzes the regioselective in-chain hydroxylation of alkanes, fatty alcohols, and fatty acids at the omega-7 position. Performs hydroxylation of C10-C16 n-alkanes and C12 and C14 fatty alcohols; and thereby enables the one step biocatalytic synthesis of rare alcohols such as 5-dodecanol and 7-tetradecanol. Converts 1-dodecanol into 1,5-dodecanediol as major product with very little sub-terminally hydroxylated products with the 1,4-dodecanediol and 1,6-dodecanediol more abundant. Converts dodecanoic acid to 5-hydroxydodecanoic acid which can be further converted into delta-dodecalactone by lactonization of the 5-hydroxy acid at low pH. Also gives sub-terminal hydroxylation of dodecanoic acid with 9-hydroxydodecanoic acid being the second most abundant product. This Aspergillus niger protein is Self-sufficient cytochrome P450 monooxygenase CYP505E5.